A 370-amino-acid polypeptide reads, in one-letter code: 3-isopropylmalate dehydrogenase (370 aa).

77-90 (GPKWDSVPYEVRPE) is a binding site for NAD(+). Residues Arg-97, Arg-107, Arg-135, and Asp-226 each contribute to the substrate site. Mg(2+) contacts are provided by Asp-226, Asp-250, and Asp-254. Position 290 to 302 (290 to 302 (GSAPDIAGKGIAN)) interacts with NAD(+).

It belongs to the isocitrate and isopropylmalate dehydrogenases family. LeuB type 1 subfamily. In terms of assembly, homodimer. Mg(2+) is required as a cofactor. The cofactor is Mn(2+).

The protein resides in the cytoplasm. The catalysed reaction is (2R,3S)-3-isopropylmalate + NAD(+) = 4-methyl-2-oxopentanoate + CO2 + NADH. The protein operates within amino-acid biosynthesis; L-leucine biosynthesis; L-leucine from 3-methyl-2-oxobutanoate: step 3/4. Its function is as follows. Catalyzes the oxidation of 3-carboxy-2-hydroxy-4-methylpentanoate (3-isopropylmalate) to 3-carboxy-4-methyl-2-oxopentanoate. The product decarboxylates to 4-methyl-2 oxopentanoate. This Rhizobium johnstonii (strain DSM 114642 / LMG 32736 / 3841) (Rhizobium leguminosarum bv. viciae) protein is 3-isopropylmalate dehydrogenase.